Consider the following 337-residue polypeptide: Phosphate acyltransferase (337 aa).

This sequence belongs to the PlsX family. Homodimer. Probably interacts with PlsY.

It localises to the cytoplasm. The enzyme catalyses a fatty acyl-[ACP] + phosphate = an acyl phosphate + holo-[ACP]. It functions in the pathway lipid metabolism; phospholipid metabolism. In terms of biological role, catalyzes the reversible formation of acyl-phosphate (acyl-PO(4)) from acyl-[acyl-carrier-protein] (acyl-ACP). This enzyme utilizes acyl-ACP as fatty acyl donor, but not acyl-CoA. In Ehrlichia canis (strain Jake), this protein is Phosphate acyltransferase.